The following is a 354-amino-acid chain: Uroporphyrinogen decarboxylase (354 aa).

Substrate-binding positions include 25-29, F44, D75, Y152, T207, and H330; that span reads RQAGR.

The protein belongs to the uroporphyrinogen decarboxylase family. As to quaternary structure, homodimer.

The protein resides in the cytoplasm. The catalysed reaction is uroporphyrinogen III + 4 H(+) = coproporphyrinogen III + 4 CO2. Its pathway is porphyrin-containing compound metabolism; protoporphyrin-IX biosynthesis; coproporphyrinogen-III from 5-aminolevulinate: step 4/4. Catalyzes the decarboxylation of four acetate groups of uroporphyrinogen-III to yield coproporphyrinogen-III. The chain is Uroporphyrinogen decarboxylase from Xanthomonas axonopodis pv. citri (strain 306).